The sequence spans 630 residues: Probable potassium transport system protein Kup (630 aa).

The next 12 membrane-spanning stretches (helical) occupy residues 19 to 39, 59 to 79, 108 to 128, 145 to 165, 173 to 193, 220 to 240, 255 to 275, 284 to 304, 345 to 365, 374 to 394, 405 to 425, and 427 to 447; these read GLIG…LYAV, LLSL…VLLI, WIIG…ATIT, PGLK…LFFV, VGGA…ALGL, LLAF…EALY, WLFF…ALVI, PFFF…ATIA, IYVP…VLGF, AYGI…AFVY, TVLV…SNVL, and VFDG…VMTT.

This sequence belongs to the HAK/KUP transporter (TC 2.A.72) family.

It is found in the cell inner membrane. The enzyme catalyses K(+)(in) + H(+)(in) = K(+)(out) + H(+)(out). Functionally, transport of potassium into the cell. Likely operates as a K(+):H(+) symporter. The sequence is that of Probable potassium transport system protein Kup from Acidiphilium cryptum (strain JF-5).